The following is a 341-amino-acid chain: Anthranilate phosphoribosyltransferase (341 aa).

Residues G79, 82–83 (GD), T87, 89–92 (NIST), 107–115 (KHGNRAVSS), and S119 each bind 5-phospho-alpha-D-ribose 1-diphosphate. G79 contributes to the anthranilate binding site. S91 provides a ligand contact to Mg(2+). An anthranilate-binding site is contributed by N110. R165 lines the anthranilate pocket. The Mg(2+) site is built by D224 and E225.

Belongs to the anthranilate phosphoribosyltransferase family. As to quaternary structure, homodimer. Mg(2+) serves as cofactor.

The enzyme catalyses N-(5-phospho-beta-D-ribosyl)anthranilate + diphosphate = 5-phospho-alpha-D-ribose 1-diphosphate + anthranilate. It functions in the pathway amino-acid biosynthesis; L-tryptophan biosynthesis; L-tryptophan from chorismate: step 2/5. Its function is as follows. Catalyzes the transfer of the phosphoribosyl group of 5-phosphorylribose-1-pyrophosphate (PRPP) to anthranilate to yield N-(5'-phosphoribosyl)-anthranilate (PRA). This chain is Anthranilate phosphoribosyltransferase, found in Bacillus cereus (strain G9842).